A 472-amino-acid polypeptide reads, in one-letter code: Uronate isomerase (472 aa).

The protein belongs to the metallo-dependent hydrolases superfamily. Uronate isomerase family.

It carries out the reaction D-glucuronate = D-fructuronate. The catalysed reaction is aldehydo-D-galacturonate = keto-D-tagaturonate. It functions in the pathway carbohydrate metabolism; pentose and glucuronate interconversion. The protein is Uronate isomerase of Oceanobacillus iheyensis (strain DSM 14371 / CIP 107618 / JCM 11309 / KCTC 3954 / HTE831).